Here is a 495-residue protein sequence, read N- to C-terminus: Amidophosphoribosyltransferase (495 aa).

The tract at residues 1–22 is disordered; the sequence is MFPPSSDLTELNDGQPLSGHHA. Residues 1–28 constitute a propeptide that is removed on maturation; sequence MFPPSSDLTELNDGQPLSGHHADKPEEA. Cys-29 acts as the Nucleophile in catalysis. The Glutamine amidotransferase type-2 domain occupies 29-254; the sequence is CGVFGIYAPE…AGELVHITES (226 aa). [4Fe-4S] cluster is bound at residue Cys-270. Mg(2+)-binding residues include Ser-317, Asp-379, and Asp-380. Residues Cys-416, Cys-467, and Cys-470 each coordinate [4Fe-4S] cluster.

The protein in the C-terminal section; belongs to the purine/pyrimidine phosphoribosyltransferase family. Mg(2+) is required as a cofactor. [4Fe-4S] cluster serves as cofactor.

The catalysed reaction is 5-phospho-beta-D-ribosylamine + L-glutamate + diphosphate = 5-phospho-alpha-D-ribose 1-diphosphate + L-glutamine + H2O. It functions in the pathway purine metabolism; IMP biosynthesis via de novo pathway; N(1)-(5-phospho-D-ribosyl)glycinamide from 5-phospho-alpha-D-ribose 1-diphosphate: step 1/2. Its function is as follows. Catalyzes the formation of phosphoribosylamine from phosphoribosylpyrophosphate (PRPP) and glutamine. This is Amidophosphoribosyltransferase from Synechocystis sp. (strain ATCC 27184 / PCC 6803 / Kazusa).